The chain runs to 129 residues: Small ribosomal subunit protein uS11 (129 aa).

It belongs to the universal ribosomal protein uS11 family. As to quaternary structure, part of the 30S ribosomal subunit. Interacts with proteins S7 and S18. Binds to IF-3.

Functionally, located on the platform of the 30S subunit, it bridges several disparate RNA helices of the 16S rRNA. Forms part of the Shine-Dalgarno cleft in the 70S ribosome. In Phocaeicola vulgatus (strain ATCC 8482 / DSM 1447 / JCM 5826 / CCUG 4940 / NBRC 14291 / NCTC 11154) (Bacteroides vulgatus), this protein is Small ribosomal subunit protein uS11.